The primary structure comprises 587 residues: MDNYTSDEDIDEDFDTQLIIQQSLQDIYKPGTAQHAPKDESLHSFLSADYKKIVETIEKVGKEDALSHLTKYHSAFGEADEIGWIPLHKAAVQLNRKILEITLSASDPSLWEQTTHNGETPLFLAVSSCLLENATFLLLNGCNPNAKNFEGNSPLLAAVLRDCYDMAALLINYGADVNLRCANERTALHEAAKLGREDMVKLMLVSGAHPDPQSTYGFTPLALAAQSGHTEIMEMLLRKGKIFCLASDSSSILLEAASGGNPDAVALLLEYGADANIPKNSGHLPIHVAADRGHLLALKILIPVTDLAAIKQSGISPVHCAAAGAHPQCLELLIQAGFDVNFMLDQRINKHYDDHRKSALYFAVSNSDLSSVKLLLSAGALPNQDPVNCLQIALRMGNYELISLLLRHGANVNYFCRVNPLHFPSALQYTLKDEVMLRMLLNYGYDTERCFDCPHGDKVHPSYTVEGWTSTVIKDTKFCEVITLSWLQHLSGKVVRVMLDYVDQVRICSKLKAVLQKQGIWSEIHFILTNPRSLKHLCRLKIRKCMGRLHLRCPVFMSFLPLPNRLKAYVLYKEYDLYGQGIFTGTW.

11 ANK repeats span residues 82–112, 117–146, 150–179, 183–212, 216–245, 248–277, 281–310, 313–342, 355–384, 385–414, and 416–449; these read IGWI…SLWE, NGET…NPNA, EGNS…DVNL, NERT…HPDP, YGFT…IFCL, DSSS…DANI, SGHL…LAAI, SGIS…DVNF, HRKS…LPNQ, DPVN…NVNY, and CRVN…DTER. The region spanning 521 to 576 is the SOCS box domain; the sequence is WSEIHFILTNPRSLKHLCRLKIRKCMGRLHLRCPVFMSFLPLPNRLKAYVLYKEYD.

The protein belongs to the ankyrin SOCS box (ASB) family. In terms of assembly, interacts with MAPRE2; this interaction promotes MAPRE2 degradation.

It participates in protein modification; protein ubiquitination. Its function is as follows. May be a substrate-recognition component of a SCF-like ECS (Elongin-Cullin-SOCS-box protein) E3 ubiquitin-protein ligase complex which mediates the ubiquitination and subsequent proteasomal degradation of target proteins. Plays a role in the inhibition of cardiomyocyte nuclear proliferation by mediating the ubiquitination and degradation of MAPRE2. The protein is Ankyrin repeat and SOCS box protein 14 (ASB14) of Homo sapiens (Human).